The sequence spans 1005 residues: MSSASKGNATGSKSPEQLLEERRHLLVQLYCISQITELKNVENHERIGKEIEKFLDQHTLIKDKPIDINALPKFRPRDVSSDRKLNNRSKSSSPSEVKRELKKQRSKDVSPSGSEEHDVDTQTLPQSQTRVVPRVQSQQSIQQSSRQSMVQAQSSRQLQQQQLQKQRSVSPTQKLPITHNNVPPVVVQAHMEPKSVQYPETQSKPSTSGKRLLDEEQQDISENQISKRQRLDSGNLSNSTAARNAATMEIPPHPYSQMIDISQLHADPTPIGVKEPQPYIIESIINNVSKEERKTFFEDDINVKEAVYMITKENAPTKLAKGMPIQEIKYLSQTLPLLRLIPQSQKALTTDLINTALNERRITVVASRIEELRRLNLWSLRQPRKFIDPVTASQPVTHHNVLIEEAKWMREDFRESLNYKIAMCTQMAQAVMEFWTYGKVCCINCKSIPPPSKDIEDIASSQDMGTKISTVEPEQKDKESNTSPDQSNDDGSSKIAEDVEMSEDGVKSSTGLTDGSEAVEEKSENGIKEGDKETDKNSSEEPTIDIQKLLKRVNPKDEIVAPSLPVTSMEVYLAKKSSSPFRNYIDIKELSTLGAAISNSLPLYGLLDEKNLDSSRPLPFEPVSKAISPLDEDHFMKLVEKQFVDEEPSLVPLSKRRGMFYGNRRSHYLRPPNAPSLRYLKFRTPTIWLPEDDQELVKNINQYAYNWDLISSQMSNHHKREYVSNIERRTPWQCFERFVQLNEKFNIADMKGPKAHNAQIWLYEAHKLQQQQKRRISPLGVGSESIQRGHRRLRWASMFEAMRKCIKKRENAPRPNPSQPRKPFDVKNMSVPTPQEMSDLKAQRDEALRRDMQIKRAAKQRMQMAQLQQGKLPLTTASSPNLPMANNPNSKDSRIRSKQSTPQSAPPLGEKEKVTTQTPTQRNTKPANKREIIEGYAKKILFQKPNFTPELALMAAENIYRSLPLSDQQRKTVIYDNVAQPKVRPPEMKHSSPTPQEILQRAQKK.

Disordered stretches follow at residues 72-180 (PKFR…ITHN), 193-214 (PKSVQYPETQSKPSTSGKRLLD), and 222-241 (ENQISKRQRLDSGNLSNSTA). Basic and acidic residues predominate over residues 75-85 (RPRDVSSDRKL). Low complexity predominate over residues 126–170 (QSQTRVVPRVQSQQSIQQSSRQSMVQAQSSRQLQQQQLQKQRSVS). 2 stretches are compositionally biased toward polar residues: residues 171 to 180 (PTQKLPITHN) and 198 to 209 (YPETQSKPSTSG). The HSA domain occupies 386–460 (FIDPVTASQP…PSKDIEDIAS (75 aa)). Residues 468–543 (ISTVEPEQKD…TDKNSSEEPT (76 aa)) are disordered. Residues 481–490 (NTSPDQSNDD) show a composition bias toward polar residues. Basic and acidic residues predominate over residues 519 to 539 (VEEKSENGIKEGDKETDKNSS). The 61-residue stretch at 684-744 (TPTIWLPEDD…FERFVQLNEK (61 aa)) folds into the Myb-like domain. Disordered regions lie at residues 807 to 844 (KKRENAPRPNPSQPRKPFDVKNMSVPTPQEMSDLKAQR), 874 to 930 (LTTA…ANKR), and 981 to 1005 (PKVRPPEMKHSSPTPQEILQRAQKK). Polar residues-rich tracts occupy residues 874–890 (LTTASSPNLPMANNPNS) and 915–926 (TTQTPTQRNTKP).

The protein belongs to the EAF1 family. In terms of assembly, component of the NuA4 histone acetyltransferase complex.

The protein resides in the nucleus. In terms of biological role, component of the NuA4 histone acetyltransferase complex which is involved in transcriptional activation of selected genes principally by acetylation of nucleosomal histone H4 and H2A. The NuA4 complex is also involved in DNA repair. This is Chromatin modification-related protein EAF1 (EAF1) from Kluyveromyces lactis (strain ATCC 8585 / CBS 2359 / DSM 70799 / NBRC 1267 / NRRL Y-1140 / WM37) (Yeast).